We begin with the raw amino-acid sequence, 384 residues long: Alcohol dehydrogenase class-3 (384 aa).

The Zn(2+) site is built by Cys-48, His-70, Cys-100, Cys-103, Cys-106, Cys-114, and Cys-177.

It belongs to the zinc-containing alcohol dehydrogenase family. Class-III subfamily. Homodimer. The cofactor is Zn(2+).

The protein localises to the cytoplasm. The enzyme catalyses a primary alcohol + NAD(+) = an aldehyde + NADH + H(+). The catalysed reaction is a secondary alcohol + NAD(+) = a ketone + NADH + H(+). It catalyses the reaction S-(hydroxymethyl)glutathione + NADP(+) = S-formylglutathione + NADPH + H(+). It carries out the reaction S-(hydroxymethyl)glutathione + NAD(+) = S-formylglutathione + NADH + H(+). Class-III ADH is remarkably ineffective in oxidizing ethanol, but it readily catalyzes the oxidation of long-chain primary alcohols and the oxidation of S-(hydroxymethyl) glutathione. Plays a role in the calcium flux to the cytoplasm in the ASJ sensory neurons upon removal of a nitric oxide stimulus. This is Alcohol dehydrogenase class-3 from Caenorhabditis elegans.